The following is a 511-amino-acid chain: Inositol-3-phosphate synthase isozyme 1 (511 aa).

NAD(+) is bound by residues Gly71, Gly72, Asn73, Asn74, Asp144, Ile181, Gln191, Arg194, Thr231, Ala232, Asn233, Thr234, Gly282, Ser283, Asp307, Ser310, Asn341, Asn342, Asp343, Lys356, Ala394, Asp395, Asp423, and Ser424.

This sequence belongs to the myo-inositol 1-phosphate synthase family. Homotrimer or homotetramer. Interacts with ATXR5 and ATXR6. Requires NAD(+) as cofactor. In terms of tissue distribution, expressed in siliques, leaves, roots, seed endosperm, but not in embryos. Highest expression in leaves, but restricted to vascular tissue in older leaves.

It localises to the cytoplasm. Its subcellular location is the cytosol. It is found in the nucleus. The catalysed reaction is D-glucose 6-phosphate = 1D-myo-inositol 3-phosphate. Its pathway is polyol metabolism; myo-inositol biosynthesis; myo-inositol from D-glucose 6-phosphate: step 1/2. Functionally, key enzyme in myo-inositol biosynthesis pathway that catalyzes the conversion of glucose 6-phosphate to 1-myo-inositol 1-phosphate in a NAD-dependent manner. Catalyzes the majority of myo-inositol synthesis required for plant growth and development. Acts as a repressor of programmed cell death and protects plant cells against cell death under high light intensity or long days. Controls its own transcription by inhibiting ATXR6 activity. Reduces the deposition of inhibitory histone marks on its own promoter. This chain is Inositol-3-phosphate synthase isozyme 1 (IPS1), found in Arabidopsis thaliana (Mouse-ear cress).